The primary structure comprises 115 residues: Large ribosomal subunit protein bL19 (115 aa).

The protein belongs to the bacterial ribosomal protein bL19 family.

In terms of biological role, this protein is located at the 30S-50S ribosomal subunit interface and may play a role in the structure and function of the aminoacyl-tRNA binding site. In Shouchella clausii (strain KSM-K16) (Alkalihalobacillus clausii), this protein is Large ribosomal subunit protein bL19.